We begin with the raw amino-acid sequence, 196 residues long: Orotate phosphoribosyltransferase (196 aa).

5-phospho-alpha-D-ribose 1-diphosphate contacts are provided by residues arginine 102, lysine 103, lysine 106, histidine 108, and 129-137 (EDVVTTGGS). Orotate is bound by residues threonine 133 and arginine 161.

Belongs to the purine/pyrimidine phosphoribosyltransferase family. PyrE subfamily. In terms of assembly, homodimer. Mg(2+) serves as cofactor.

The enzyme catalyses orotidine 5'-phosphate + diphosphate = orotate + 5-phospho-alpha-D-ribose 1-diphosphate. It participates in pyrimidine metabolism; UMP biosynthesis via de novo pathway; UMP from orotate: step 1/2. In terms of biological role, catalyzes the transfer of a ribosyl phosphate group from 5-phosphoribose 1-diphosphate to orotate, leading to the formation of orotidine monophosphate (OMP). This chain is Orotate phosphoribosyltransferase, found in Prochlorococcus marinus (strain MIT 9303).